A 680-amino-acid chain; its full sequence is DNA ligase (680 aa).

NAD(+) contacts are provided by residues 35 to 39 (DAQYD), 84 to 85 (SL), and E115. K117 (N6-AMP-lysine intermediate) is an active-site residue. The NAD(+) site is built by R138, E174, K291, and K315. Residues C419, C422, C437, and C442 each coordinate Zn(2+). The region spanning 601–680 (NKNMPFSGME…REFINMLEQS (80 aa)) is the BRCT domain.

It belongs to the NAD-dependent DNA ligase family. LigA subfamily. Requires Mg(2+) as cofactor. It depends on Mn(2+) as a cofactor.

The enzyme catalyses NAD(+) + (deoxyribonucleotide)n-3'-hydroxyl + 5'-phospho-(deoxyribonucleotide)m = (deoxyribonucleotide)n+m + AMP + beta-nicotinamide D-nucleotide.. Its function is as follows. DNA ligase that catalyzes the formation of phosphodiester linkages between 5'-phosphoryl and 3'-hydroxyl groups in double-stranded DNA using NAD as a coenzyme and as the energy source for the reaction. It is essential for DNA replication and repair of damaged DNA. This chain is DNA ligase, found in Dehalococcoides mccartyi (strain ATCC BAA-2100 / JCM 16839 / KCTC 5957 / BAV1).